Reading from the N-terminus, the 246-residue chain is 3-oxoacyl-[acyl-carrier-protein] reductase FabG (246 aa).

NADP(+) is bound by residues 11 to 14 (GASR), 62 to 63 (NV), and asparagine 89. Serine 141 contributes to the substrate binding site. Tyrosine 154 acts as the Proton acceptor in catalysis. Residues 154–158 (YVATK) and isoleucine 187 contribute to the NADP(+) site.

Belongs to the short-chain dehydrogenases/reductases (SDR) family. Homotetramer.

The enzyme catalyses a (3R)-hydroxyacyl-[ACP] + NADP(+) = a 3-oxoacyl-[ACP] + NADPH + H(+). The protein operates within lipid metabolism; fatty acid biosynthesis. Functionally, catalyzes the NADPH-dependent reduction of beta-ketoacyl-ACP substrates to beta-hydroxyacyl-ACP products, the first reductive step in the elongation cycle of fatty acid biosynthesis. The protein is 3-oxoacyl-[acyl-carrier-protein] reductase FabG (fabG) of Staphylococcus aureus (strain Mu50 / ATCC 700699).